The following is a 177-amino-acid chain: MSRIGKKPVPVPQGVTANVDGQVVTAKGPKGELKFVVNDDVLVKLEDGAIAVDPRNESKMARSKWGMSRTQIANILTGVKDGFEKRLEINGVGYRAAMQGKNLQLSLGFSHDVSYEPPTGITITVPKPTEIVVSGIDKQVVGQVAAEIRKYRGPEPYKGKGVKYAGETIVRKEGKKK.

Belongs to the universal ribosomal protein uL6 family. In terms of assembly, part of the 50S ribosomal subunit.

Its function is as follows. This protein binds to the 23S rRNA, and is important in its secondary structure. It is located near the subunit interface in the base of the L7/L12 stalk, and near the tRNA binding site of the peptidyltransferase center. This Chelativorans sp. (strain BNC1) protein is Large ribosomal subunit protein uL6.